Consider the following 225-residue polypeptide: uncharacterized protein (225 aa).

4 consecutive transmembrane segments (helical) span residues 40-60 (LISLAAVFFCHSGMEALLSIV), 63-83 (LAFFHAGTALSSLLASLPFSF), 151-171 (LSETNLSIVFCILTTSSLTIL), and 176-196 (IFSLLLVVCTSACFSSAIVSL).

The protein localises to the membrane. This is an uncharacterized protein from Saccharomyces cerevisiae (strain ATCC 204508 / S288c) (Baker's yeast).